Here is a 474-residue protein sequence, read N- to C-terminus: Glutamate--tRNA ligase (474 aa).

A 'HIGH' region motif is present at residues 18–28 (PSPTGFLHIGG). The 'KMSKS' region motif lies at 244 to 248 (KLSKR). Lys-247 is an ATP binding site.

It belongs to the class-I aminoacyl-tRNA synthetase family. Glutamate--tRNA ligase type 1 subfamily. Monomer.

Its subcellular location is the cytoplasm. It catalyses the reaction tRNA(Glu) + L-glutamate + ATP = L-glutamyl-tRNA(Glu) + AMP + diphosphate. In terms of biological role, catalyzes the attachment of glutamate to tRNA(Glu) in a two-step reaction: glutamate is first activated by ATP to form Glu-AMP and then transferred to the acceptor end of tRNA(Glu). The protein is Glutamate--tRNA ligase of Caulobacter sp. (strain K31).